The chain runs to 361 residues: MSLSLGDIKFPDNWDLIPNEKNYIDYVYKESIELEVWRPNNKRDLMAHNNVVSLAKYFWPHVDFNRLVMGGELMVWFFSFDDVLDAGIYTDEKQMDLVKRMDNVFINGTVESDATGPEKMALHLRKKCEVMCGKRRKDTFNRFISSCVQWVDSIIPFNKLRSAQGTSPHLELYSYLRKVNIGAYPCVTLTEVMLDHEIEYYIWSDPKWIKMNEDIAIITTLINDLVSYEKEVNDQAGDLNPLYFLQNQKNIPLPDSYKQVVDLIDFWVKDYQTMEQSLLNEMEFKDSKQRSDMEFILEHLRYLASGSKKWSMQTPRYCSPTSPFIEMRTKPSTPVMNSTKKQKIDHVPSQSFISTPIDLNN.

Residues 81–86 carry the DDxx(x)D/E motif motif; the sequence is DDVLDA. Residues 223 to 231 carry the NDxxSxxxD/E motif motif; the sequence is NDLVSYEKE.

The protein belongs to the terpene synthase family.

It carries out the reaction (2E,6E)-farnesyl diphosphate = (2S,3R,6S,9S)-(-)-protoillud-7-ene + diphosphate. In terms of biological role, terpene synthase that converts its substrate farnesyl diphosphate (FPP) into the sesquiterpene (2S,3R,6S,9S)-(-)-protoillud-7-ene. This chain is Terpene synthase 6, found in Dictyostelium discoideum (Social amoeba).